The sequence spans 421 residues: Synaptotagmin-1 (421 aa).

Over 1–57 (MVSASHPEALAAPVTTVATLVPHNATEPASPGEGKEDAFSKLKQKFMNELHKIPLPP) the chain is Vesicular. A glycan (N-linked (GlcNAc...) asparagine) is linked at Asn-24. The chain crosses the membrane as a helical span at residues 58-79 (WALIAIAIVAVLLVVTCCFCVC). Residues Cys-74, Cys-75, Cys-77, Cys-79, and Cys-82 are each lipidated (S-palmitoyl cysteine). Topologically, residues 80-421 (KKCLFKKKNK…EVDAMLAVKK (342 aa)) are cytoplasmic. The interval 112-141 (TMKDQALKDDDAETGLTDGEEKEEPKEEEK) is disordered. Residues 121–133 (DDAETGLTDGEEK) are compositionally biased toward acidic residues. Thr-128 bears the Phosphothreonine mark. Positions 135–381 (EPKEEEKLGK…AIGKVFVGYN (247 aa)) are phospholipid binding. One can recognise a C2 1 domain in the interval 141-260 (KLGKLQYSLD…DFGHVTEEWR (120 aa)). Residues Leu-171, Asp-172, and Asp-178 each coordinate Ca(2+). Tyr-229 is subject to Phosphotyrosine. 6 residues coordinate Ca(2+): Asp-230, Phe-231, Asp-232, Ser-235, Lys-236, and Asp-238. Ser-264 carries the post-translational modification Phosphoserine. Residues 272–405 (KLGDICFSLR…NPRRPIAQWH (134 aa)) enclose the C2 2 domain. Ca(2+) is bound by residues Asp-303 and Asp-309. Phosphoserine is present on residues Ser-342 and Ser-344. Ca(2+)-binding residues include Asp-363, Asp-365, and Asp-371.

Belongs to the synaptotagmin family. Homotetramer. Heterodimer; heterodimerizes with SYT2 in presence of calcium. Interacts with SCAMP5. Interacts with STON2. Forms a complex with SV2B, syntaxin 1 and SNAP25. Interacts with SV2A, SV2B and SV2C. Interacts with RIMS1. Interacts with PRRT2. Interacts with DNAJC5 in a phosphorylation-dependent manner. Interacts (via N-terminus) with RAB3A. Interacts with SYT12. Interacts with calmodulin. Interacts with DNM1 (via C-terminal proline-rich domain (PRD)); this interaction facilitates vesicle fission during clathrin-mediated endocytosis (CME). As to quaternary structure, (Microbial infection) Interacts with C.botulinum neurotoxin type B (BoNT/B, botB). Has lower affinity for BoNT/B than Syt2; mutating its residues to match those in Syt2 increases its affinity. In terms of assembly, (Microbial infection) Interacts with C.botulinum neurotoxin type G (BoNT/G, botG). Ca(2+) is required as a cofactor. Post-translationally, glycosylated. Expressed in the brain (at protein level). Predominantly expressed in rostral, phylogenetically younger brain regions, and in some endocrine tissues.

The protein resides in the cytoplasmic vesicle. It is found in the secretory vesicle membrane. Its subcellular location is the secretory vesicle. The protein localises to the synaptic vesicle membrane. It localises to the chromaffin granule membrane. The protein resides in the cytoplasm. In terms of biological role, calcium sensor that participates in triggering neurotransmitter release at the synapse. May have a regulatory role in the membrane interactions during trafficking of synaptic vesicles at the active zone of the synapse. It binds acidic phospholipids with a specificity that requires the presence of both an acidic head group and a diacyl backbone. A Ca(2+)-dependent interaction between synaptotagmin and putative receptors for activated protein kinase C has also been reported. It can bind to at least three additional proteins in a Ca(2+)-independent manner; these are neurexins, syntaxin and AP2. Plays a role in dendrite formation by melanocytes. Its function is as follows. (Microbial infection) Receptor for C.botulinum neurotoxin type B (BoNT/B, botB); interaction is improved in the presence of gangliosides. BoNT/B toxin binds to the membrane proximal vesicular domain of Syt1 (residues 32-51). (Microbial infection) Receptor for C.botulinum neurotoxin type G (BoNT/G, botG); unlike the case with BoNT/B, interaction is not improved in the presence of gangliosides. BoNT/G toxin binds to the vesicular domain of Syt1 (residues 32-53). This chain is Synaptotagmin-1, found in Rattus norvegicus (Rat).